We begin with the raw amino-acid sequence, 346 residues long: 2-oxoglutarate synthase subunit KorA (346 aa).

Heterotetramer of the KorA, KorB, KorC and KorD subunits.

It carries out the reaction 2 oxidized [2Fe-2S]-[ferredoxin] + 2-oxoglutarate + CoA = succinyl-CoA + 2 reduced [2Fe-2S]-[ferredoxin] + CO2 + H(+). This Archaeoglobus fulgidus (strain ATCC 49558 / DSM 4304 / JCM 9628 / NBRC 100126 / VC-16) protein is 2-oxoglutarate synthase subunit KorA (korA).